Here is a 316-residue protein sequence, read N- to C-terminus: Daunorubicin resistance ATP-binding protein DrrA3 (316 aa).

The region spanning 6-236 (ITVDGAEKRY…TGGDRIDVVL (231 aa)) is the ABC transporter domain. 38–45 (GPNGAGKT) provides a ligand contact to ATP.

It belongs to the ABC transporter superfamily. Drug exporter-1 (DrugE1) (TC 3.A.1.105) family. As to quaternary structure, the complex is probably composed of two ATP-binding proteins (DrrA3) and two transmembrane proteins (DrrB3).

It localises to the cell membrane. The enzyme catalyses daunorubicin(in) + ATP + H2O = daunorubicin(out) + ADP + phosphate + H(+). Part of the ABC transporter complex DrrA3B3 involved in daunorubicin efflux. Responsible for energy coupling to the transport system. Confers self-resistance to daunorubicin, an antibiotic produced by S.coeruleorubidus. The efficiency of DrrA3B3 to export daunorubicin is probably lower than that of DrrA1B1 or DrrA2B2. The polypeptide is Daunorubicin resistance ATP-binding protein DrrA3 (Streptomyces coeruleorubidus).